The sequence spans 350 residues: MQGGSSGIGYGLKYQARCISDVKADRDHTSFLTGTLSLKEENEVHLLRLSSGGSELLCEGLFSHPNEIWDLASSPFDQRIFSTVFSTGDSYGAAIWQIPEPYGQSNSSTLECVASLDAHVGKINCVLWCPSGNSDKLISMDEQNLVFWSLDSSKKSAEVLSKESAGMRHSLSGGAWNPHDVNSVAATSESSIQFWDLRTMKKNNSIERAHVRNVDYNLKREHILVSADDESGIHLWDLRKTKFPVQELPGHTHWTWAVRCNPEYEELILSVGTDSAVNLWFASASSEHKTSESPVEASRQRVNPLLNSYTDYEDSVYGLAWSSREPWIFASLSYDGRVVIESVKPFLPRR.

WD repeat units lie at residues 39–79 (KEEN…FDQR), 118–158 (AHVG…KSAE), 166–205 (GMRHSLSGGAWNPHDVNSVAATSESSIQFWDLRTMKKNNS), 206–246 (IERA…FPVQ), 250–290 (GHTH…EHKT), and 311–350 (DYEDSVYGLAWSSREPWIFASLSYDGRVVIESVKPFLPRR).

In terms of assembly, interacts with ABI5 and DDB1A and DWA1.

Its subcellular location is the nucleus. It participates in protein modification; protein ubiquitination. Its function is as follows. Component of the CUL4-RBX1-DDB1-DWA1/DWA2 E3 ubiquitin-protein ligase complex that acts as a negative regulator in abscisic acid (ABA) signaling. May function as the substrate recognition module within this complex leading to ABI5 degradation. Functionally redundant with DWA1. This is WD repeat-containing protein DWA2 (DWA2) from Arabidopsis thaliana (Mouse-ear cress).